An 824-amino-acid chain; its full sequence is Probable acyl-CoA dehydrogenase IBR3 (824 aa).

The residue at position 2 (Gly-2) is an N-acetylglycine. Residues 555–565 (FAMTEPQVASS), 589–591 (WTS), Arg-706, Gln-776, and 776–780 (QVHGA) each bind FAD. A Microbody targeting signal motif is present at residues 822–824 (SKL).

Belongs to the acyl-CoA dehydrogenase family. FAD serves as cofactor.

Its subcellular location is the peroxisome. The catalysed reaction is a 2,3-saturated acyl-CoA + A = a 2,3-dehydroacyl-CoA + AH2. In terms of biological role, involved with IBR1 and IBR10 in the peroxisomal beta-oxidation of indole-3-butyric acid (IBA) to form indole-3-acetic acid (IAA), a biologically active auxin. May be responsible for catalyzing the first step in IBA-CoA beta-oxidation. May play a role in defense response to pathogenic bacteria. The polypeptide is Probable acyl-CoA dehydrogenase IBR3 (Arabidopsis thaliana (Mouse-ear cress)).